The primary structure comprises 44 residues: Photosystem I reaction center subunit IX (44 aa).

The helical transmembrane segment at 7 to 27 (YLSTAPVLATLWFGSLAGLLI) threads the bilayer.

Belongs to the PsaJ family.

The protein localises to the plastid. It is found in the chloroplast thylakoid membrane. Functionally, may help in the organization of the PsaE and PsaF subunits. The chain is Photosystem I reaction center subunit IX from Cycas taitungensis (Prince sago).